We begin with the raw amino-acid sequence, 64 residues long: APECGREAHCGDDCQSQVVTRDFDDRTCPKLLCCSKDGWCGNTDANWRCGVDFGRTCPNDLCCS.

2 Chitin-binding type-1 domains span residues 1-20 (APEC…QVVT) and 22-45 (DFDD…NTDA).

Post-translationally, glycosylated.

In terms of biological role, N-acetyl-D-glucosamine binding lectin. Shows low hemagglutinating activity towards human erythrocytes. Has low mitogenic activity towards human peripheral blood lymphocytes. This Phytolacca americana (American pokeweed) protein is Lectin-A.